The primary structure comprises 500 residues: Cytochrome P450 71D13 (500 aa).

A helical; Signal-anchor for type II membrane protein membrane pass occupies residues 3–23 (LQISSAIIILVVTYTISLLII). C439 is a binding site for heme.

It belongs to the cytochrome P450 family. Requires heme as cofactor.

The protein resides in the endoplasmic reticulum membrane. The enzyme catalyses (4S)-limonene + reduced [NADPH--hemoprotein reductase] + O2 = (1S,6R)-isopiperitenol + oxidized [NADPH--hemoprotein reductase] + H2O + H(+). In terms of biological role, hydroxylates (-)-(4S)-limonene to (-)-trans-isopiperitenol, a precursor of (-)-menthol, responsible for the cooling sensation of peppermint. The chain is Cytochrome P450 71D13 (CYP71D13) from Mentha piperita (Peppermint).